Reading from the N-terminus, the 163-residue chain is UPF0416 protein RBE_0909 (163 aa).

Belongs to the UPF0416 family.

In Rickettsia bellii (strain RML369-C), this protein is UPF0416 protein RBE_0909.